The following is a 1021-amino-acid chain: Probable LRR receptor-like serine/threonine-protein kinase RFK1 (1021 aa).

A signal peptide spans Met1–Ala39. Topologically, residues Lys41 to Tyr625 are extracellular. N-linked (GlcNAc...) asparagine glycosylation occurs at Asn96. LRR repeat units lie at residues Asp99–Leu122 and Pro123–Ser146. 3 N-linked (GlcNAc...) asparagine glycosylation sites follow: Asn136, Asn147, and Asn168. LRR repeat units lie at residues Leu148–Asn168, Ser169–Leu192, Val193–Leu216, Asn218–Trp240, and Lys241–Asn266. Residue Asn218 is glycosylated (N-linked (GlcNAc...) asparagine). 2 N-linked (GlcNAc...) asparagine glycosylation sites follow: Asn287 and Asn300. LRR repeat units lie at residues Val288 to Leu312, Lys313 to Glu336, Leu338 to Asp359, and Ile361 to Arg381. N-linked (GlcNAc...) asparagine glycosylation is found at Asn486 and Asn512. The helical transmembrane segment at Ile626–Cys646 threads the bilayer. Topologically, residues Gly647–Pro1021 are cytoplasmic. Thr670 carries the post-translational modification Phosphothreonine. Positions Phe681–Tyr956 constitute a Protein kinase domain. ATP is bound by residues Ile687–Val695 and Lys709. At Tyr754 the chain carries Phosphotyrosine. The Proton acceptor role is filled by Asp807. Phosphoserine is present on Ser840. A phosphothreonine mark is found at Thr841 and Thr846. Tyr854 carries the phosphotyrosine modification. A disordered region spans residues Glu985–Pro1021. Residues Ser993–Ser1005 show a composition bias toward low complexity. The segment covering Gln1012–Pro1021 has biased composition (basic and acidic residues).

The protein belongs to the protein kinase superfamily. Ser/Thr protein kinase family. In terms of tissue distribution, mostly expressed in flower buds, especially in stamens.

The protein localises to the membrane. It catalyses the reaction L-seryl-[protein] + ATP = O-phospho-L-seryl-[protein] + ADP + H(+). The enzyme catalyses L-threonyl-[protein] + ATP = O-phospho-L-threonyl-[protein] + ADP + H(+). This Arabidopsis thaliana (Mouse-ear cress) protein is Probable LRR receptor-like serine/threonine-protein kinase RFK1 (RKF1).